The sequence spans 66 residues: Large ribosomal subunit protein uL29 (66 aa).

The protein belongs to the universal ribosomal protein uL29 family.

This Francisella tularensis subsp. holarctica (strain LVS) protein is Large ribosomal subunit protein uL29.